The primary structure comprises 93 residues: Bublin coiled-coil protein (93 aa).

Disordered regions lie at residues 1–26 (MAGP…GDTF) and 74–93 (QQQS…QPPA). Positions 17-26 (DEGDEGGDTF) are enriched in acidic residues. The stretch at 59–80 (LKELLESNRQTRLEFQQQSKQL) forms a coiled coil.

This sequence belongs to the UPF0184 (EST00098) family.

It localises to the cell junction. Its subcellular location is the cytoplasm. The protein localises to the cytoskeleton. In terms of biological role, essential for intermediate filament organization in intestinal cells, interacts with intermediate filament and regulates intestinal lumen morphology. In Taeniopygia guttata (Zebra finch), this protein is Bublin coiled-coil protein (BBLN).